Here is a 576-residue protein sequence, read N- to C-terminus: Lipoprotein LpqB (576 aa).

The N-terminal stretch at 1–16 (MRRVTRTIAAAGAAIA) is a signal peptide. Cys17 is lipidated: N-palmitoyl cysteine. Cys17 carries the S-diacylglycerol cysteine lipid modification.

This sequence belongs to the LpqB lipoprotein family.

The protein localises to the cell membrane. This Bifidobacterium longum (strain NCC 2705) protein is Lipoprotein LpqB.